The chain runs to 1282 residues: Protein crumbs homolog 2 (1282 aa).

A signal peptide spans 1–35 (MALVGPRIWGPRRDIYPLLLLLLLLLLLLLPWVPA). The Extracellular segment spans residues 36 to 1221 (GLVPPETPSV…PLPLPFPLLE (1186 aa)). The region spanning 71–110 (ELGGCATQPCHHGALCVPQGPDPNSFRCYCVPGFQGPHCE) is the EGF-like 1 domain. Intrachain disulfides connect Cys-75–Cys-86, Cys-80–Cys-98, Cys-100–Cys-109, Cys-116–Cys-127, Cys-121–Cys-136, Cys-138–Cys-147, Cys-154–Cys-165, Cys-159–Cys-174, Cys-176–Cys-185, Cys-192–Cys-203, Cys-197–Cys-212, Cys-214–Cys-224, Cys-231–Cys-242, Cys-236–Cys-251, Cys-253–Cys-262, Cys-269–Cys-280, Cys-274–Cys-310, Cys-312–Cys-321, Cys-328–Cys-339, Cys-333–Cys-348, Cys-350–Cys-359, Cys-366–Cys-377, Cys-371–Cys-386, Cys-388–Cys-397, Cys-404–Cys-415, Cys-409–Cys-428, and Cys-430–Cys-439. An EGF-like 2; calcium-binding domain is found at 112-148 (DIDECASRPCQHGGTCQNLADHYECHCPLGYAGVTCE). In terms of domain architecture, EGF-like 3; calcium-binding spans 150-186 (EVDECSSAPCLHGGSCLDGVGSYRCVCAPGYAGANCQ). Positions 188-225 (DVDECQSQPCAHGGVCHDLVNGFRCDCADTGYEGARCE) constitute an EGF-like 4; calcium-binding domain. 2 consecutive EGF-like domains span residues 227–263 (EVLE…ERCE) and 265–322 (DEDE…NDCS). Residue Asn-239 is glycosylated (N-linked (GlcNAc...) asparagine). A glycan (O-linked (Glc...) serine) is linked at Ser-271. Positions 324–360 (DVDECASGPCLNGGSCQDLPNGFQCYCQDGYTGLTCQ) constitute an EGF-like 7; calcium-binding domain. Positions 362 to 398 (DMDECQSEPCLHGGTCSDTVAGYICQCPEAWGGHDCS) constitute an EGF-like 8; calcium-binding domain. Residues 400–440 (QLTGCQGHTCPLAATCIPTFKSGLHGYFCRCPPGTYGPFCG) enclose the EGF-like 9 domain. A glycan (N-linked (GlcNAc...) asparagine) is linked at Asn-442. The region spanning 444–607 (TFSVVSGSSV…ELKGTVLLGC (164 aa)) is the Laminin G-like 1 domain. Cystine bridges form between Cys-583–Cys-607, Cys-613–Cys-624, Cys-618–Cys-633, and Cys-635–Cys-644. Residues 609–645 (RREPCQPLPCAHGGACVDLWTHFRCDCPRPYRGATCT) form the EGF-like 10 domain. The Laminin G-like 2 domain maps to 649 to 808 (PAATFGLGGA…GQSSNLTQGC (160 aa)). N-linked (GlcNAc...) asparagine glycans are attached at residues Asn-672, Asn-693, Asn-789, and Asn-803. Intrachain disulfides connect Cys-769/Cys-808, Cys-814/Cys-825, Cys-819/Cys-834, and Cys-836/Cys-845. The EGF-like 11 domain maps to 810 to 846 (SEDTCNPNPCFNGGTCHVTWNDFYCTCSENFTGPTCA). 4 N-linked (GlcNAc...) asparagine glycosylation sites follow: Asn-839, Asn-889, Asn-929, and Asn-1006. In terms of domain architecture, Laminin G-like 3 spans 872–1051 (VAEATFREGP…PGSPAVSLGC (180 aa)). Intrachain disulfides connect Cys-1010-Cys-1051, Cys-1057-Cys-1068, Cys-1062-Cys-1077, Cys-1079-Cys-1088, Cys-1095-Cys-1105, Cys-1100-Cys-1115, Cys-1117-Cys-1126, Cys-1135-Cys-1147, Cys-1141-Cys-1156, Cys-1158-Cys-1167, Cys-1174-Cys-1185, Cys-1179-Cys-1194, and Cys-1196-Cys-1205. 4 consecutive EGF-like domains span residues 1053 to 1089 (GGPV…PRCE), 1091 to 1127 (RADP…PRCR), 1131 to 1168 (LPQG…LRCQ), and 1170 to 1206 (LDKP…QFCE). N-linked (GlcNAc...) asparagine glycans are attached at residues Asn-1138 and Asn-1155. A helical membrane pass occupies residues 1222–1242 (VAVPAACACLLLLLLGLLSGI). At 1243 to 1282 (LAARKRRQSEGTYSPSQQEVAGARLEMDSVLKVPPEERLI) the chain is on the cytoplasmic side. Residues 1246 to 1282 (RKRRQSEGTYSPSQQEVAGARLEMDSVLKVPPEERLI) form an interaction with EPB41L5 region.

This sequence belongs to the Crumbs protein family. As to quaternary structure, interacts (via intracellular domain) with EPB41L5. Post-translationally, O-glucosylated by POGLUT1 at Ser-271; consists of an O-glucose trisaccharide, in which the O-glucose is elongated by the addition of two xylose residues. O-glucosylation is required for localization at the plasma membrane. In terms of tissue distribution, in the adult eye, strongly expressed in the outer nuclear layer, containing the cell bodies of the photoreceptor cells, and in the inner nuclear layer, containing the cell bodies of the horizontal, bipolar, amacrine, and Mueller glial cells. Also expressed in some cells in the ganglion cell layer (or may be displaced amacrine cells rather than ganglion cells).

It localises to the apical cell membrane. Apical polarity protein that plays a central role during the epithelial-to-mesenchymal transition (EMT) at gastrulation, when newly specified mesodermal cells move inside the embryo. Acts by promoting cell ingression, the process by which cells leave the epithelial epiblast and move inside the embryo to form a new tissue layer. The anisotropic distribution of CRB2 and MYH10/myosin-IIB at cell edges define which cells will ingress: cells with high apical CRB2 are probably extruded from the epiblast by neighboring cells with high levels of apical MYH10/myosin-IIB. Also required for maintenance of the apical polarity complex during development of the cortex. In Mus musculus (Mouse), this protein is Protein crumbs homolog 2.